The following is a 120-amino-acid chain: Small ribosomal subunit protein uS13 (120 aa).

Residues 93–120 (RRGLPCRGQKTKTNARTRKGKRKTVGAA) form a disordered region.

Belongs to the universal ribosomal protein uS13 family. As to quaternary structure, part of the 30S ribosomal subunit. Forms a loose heterodimer with protein S19. Forms two bridges to the 50S subunit in the 70S ribosome.

Functionally, located at the top of the head of the 30S subunit, it contacts several helices of the 16S rRNA. In the 70S ribosome it contacts the 23S rRNA (bridge B1a) and protein L5 of the 50S subunit (bridge B1b), connecting the 2 subunits; these bridges are implicated in subunit movement. Contacts the tRNAs in the A and P-sites. In Sulfurovum sp. (strain NBC37-1), this protein is Small ribosomal subunit protein uS13.